Here is a 443-residue protein sequence, read N- to C-terminus: MSKTYHFIGIKGAGMSALALLLHQMGHKVQGSDVEKYYFTQRGLEQAGITILPFSEDNISPDMELIAGNAFREDNNSEVAYAMRHQLPFKRYHEFLGEFMKQFTSLGVAGAHGKTSTTGLLSHVLKHMTATSYLIGDGTGHGAADARYFVFESDEYERHFMPYHPEYSIITNIDFDHPDYFTGLDDVFNAFNDYAKQVKKALFVYGEDEELRKISSPAPIYYYGFEDTNDFVAFDITRTTNGSDFKVKHKGHAIGQFHVPAYGRHNILNATAVIANLFIAGFDMKLVAEHLKSFSGVKRRFTEKVINDTIIIDDFAHHPTEIIATLDAARQKYPNKEIIAIFQPHTFTRTIALLDDFAHALNEADSVYLAPIYGSAREVDKGDVKVEDLAARVERPAKVISVDNVSPLLDHDNAVYVFMGAGDIQLYERSFEELLANLTKNNQ.

110–116 lines the ATP pocket; it reads GAHGKTS.

This sequence belongs to the MurCDEF family.

It localises to the cytoplasm. The enzyme catalyses UDP-N-acetyl-alpha-D-muramate + L-alanine + ATP = UDP-N-acetyl-alpha-D-muramoyl-L-alanine + ADP + phosphate + H(+). The protein operates within cell wall biogenesis; peptidoglycan biosynthesis. Functionally, cell wall formation. The protein is UDP-N-acetylmuramate--L-alanine ligase of Streptococcus equi subsp. zooepidemicus (strain MGCS10565).